The chain runs to 418 residues: MAGPFSRLLSARPGLKLLALAGAGSLAAGILLRPESVRAATGERRRLYPPSAEYPDLRKHNNCMASHLTPAVYARLCDKTTPTGWTLDQCIQTGVDNPGHPFIKTVGMVAGDEETYEVFAELFDPVIQERHNGYDPRTMKHTTDLDASKIRSGYFDERYVLSSRVRTGRSIRGLSLPPACTRAERREVERVVVDALSGLKGDLAGRYYRLSEMTEAEQQQLIDDHFLFDKPVSPLLTAAGMARDWPDARGIWHNNEKSFLIWVNEEDHTRVISMEKGGNMKRVFERFCRGLKKVEKLIQERGWEFMWNERLGYILTCPSNLGTGLRAGVHVKLPLLSKDSRFPKILENLRLQKRGTGGVDTPATADVFDISNLDRLGKSEVELVQLVIDGVNYLIDCERRLEKGQDIRIPPPLVHGKH.

The transit peptide at 1–39 (MAGPFSRLLSARPGLKLLALAGAGSLAAGILLRPESVRA) directs the protein to the mitochondrion. Residues 40 to 64 (ATGERRRLYPPSAEYPDLRKHNNCM) are cardiolipin-binding. The Phosphagen kinase N-terminal domain maps to 46-132 (RLYPPSAEYP…FDPVIQERHN (87 aa)). Residue Ser-152 is modified to Phosphoserine. Residues 159–401 (YVLSSRVRTG…NYLIDCERRL (243 aa)) enclose the Phosphagen kinase C-terminal domain. 162–166 (SSRVR) is a binding site for ATP. At Ser-197 the chain carries Phosphoserine. Thr-214 is modified (phosphothreonine). Residue His-225 coordinates ATP. Residue Ser-233 is modified to Phosphoserine. ATP is bound by residues Arg-270, Arg-326, 354-359 (RGTGGV), and Asp-369. Thr-356 carries the phosphothreonine modification.

Belongs to the ATP:guanido phosphotransferase family. Exists as an octamer composed of four MTCK homodimers. As to expression, in many tissues, with highest levels in brain gut and kidney. In the kidney localized primarily in the outer medulla in the thick ascending limb and distal convoluted tubule.

It is found in the mitochondrion inner membrane. It catalyses the reaction creatine + ATP = N-phosphocreatine + ADP + H(+). Functionally, reversibly catalyzes the transfer of phosphate between ATP and various phosphogens (e.g. creatine phosphate). Creatine kinase isoenzymes play a central role in energy transduction in tissues with large, fluctuating energy demands, such as skeletal muscle, heart, brain and spermatozoa. In Rattus norvegicus (Rat), this protein is Creatine kinase U-type, mitochondrial (Ckmt1).